Consider the following 198-residue polypeptide: MDQQQNFQPLAESFYQVPTLELAKNLLGCILVKQTEEGTSSGVIVETEAYLGNTDRAAHGYGNRRTKRTEILYSKPGYAYVHLIHNHRLINVVSSMEGDPESVLIRAVEPFSGIDEMLMRRPVKKFQNLTSGPGKLTQAMGIYMEDYGHFMLAPPLFISEGKSPASVKTGSRIGIDNTGEAKDYPYRFWVDGNPFVSR.

This sequence belongs to the DNA glycosylase MPG family.

The sequence is that of Putative 3-methyladenine DNA glycosylase from Oceanobacillus iheyensis (strain DSM 14371 / CIP 107618 / JCM 11309 / KCTC 3954 / HTE831).